Consider the following 302-residue polypeptide: Orotidine 5'-phosphate decarboxylase (302 aa).

The active-site Proton donor is the Lys-105.

Belongs to the OMP decarboxylase family. Type 2 subfamily.

The enzyme catalyses orotidine 5'-phosphate + H(+) = UMP + CO2. Its pathway is pyrimidine metabolism; UMP biosynthesis via de novo pathway; UMP from orotate: step 2/2. The chain is Orotidine 5'-phosphate decarboxylase from Rhodopirellula baltica (strain DSM 10527 / NCIMB 13988 / SH1).